The chain runs to 474 residues: tRNA modification GTPase MnmE (474 aa).

Residues arginine 23, glutamate 86, and lysine 125 each coordinate (6S)-5-formyl-5,6,7,8-tetrahydrofolate. The 176-residue stretch at 221 to 396 (GIPVAIVGEP…LKEKLLEYVN (176 aa)) folds into the TrmE-type G domain. Asparagine 231 is a binding site for K(+). GTP is bound by residues 231 to 236 (NVGKST), 250 to 256 (SEIAGTT), and 275 to 278 (DTAG). Serine 235 is a binding site for Mg(2+). Residues serine 250, isoleucine 252, and threonine 255 each contribute to the K(+) site. Threonine 256 lines the Mg(2+) pocket. Lysine 474 contributes to the (6S)-5-formyl-5,6,7,8-tetrahydrofolate binding site.

This sequence belongs to the TRAFAC class TrmE-Era-EngA-EngB-Septin-like GTPase superfamily. TrmE GTPase family. In terms of assembly, homodimer. Heterotetramer of two MnmE and two MnmG subunits. The cofactor is K(+).

The protein resides in the cytoplasm. Functionally, exhibits a very high intrinsic GTPase hydrolysis rate. Involved in the addition of a carboxymethylaminomethyl (cmnm) group at the wobble position (U34) of certain tRNAs, forming tRNA-cmnm(5)s(2)U34. The sequence is that of tRNA modification GTPase MnmE from Christiangramia forsetii (strain DSM 17595 / CGMCC 1.15422 / KT0803) (Gramella forsetii).